We begin with the raw amino-acid sequence, 146 residues long: 3-hydroxyacyl-[acyl-carrier-protein] dehydratase FabZ (146 aa).

His-48 is a catalytic residue.

This sequence belongs to the thioester dehydratase family. FabZ subfamily.

The protein resides in the cytoplasm. It carries out the reaction a (3R)-hydroxyacyl-[ACP] = a (2E)-enoyl-[ACP] + H2O. Its function is as follows. Involved in unsaturated fatty acids biosynthesis. Catalyzes the dehydration of short chain beta-hydroxyacyl-ACPs and long chain saturated and unsaturated beta-hydroxyacyl-ACPs. The chain is 3-hydroxyacyl-[acyl-carrier-protein] dehydratase FabZ from Campylobacter lari (strain RM2100 / D67 / ATCC BAA-1060).